A 433-amino-acid chain; its full sequence is Arrestin domain-containing protein 1 (433 aa).

2 disordered regions span residues 296 to 322 and 349 to 372; these read GLGL…AEAA and LSSV…PLHP. Over residues 301–312 the composition is skewed to pro residues; that stretch reads PGAPPLVVPSAP. Short sequence motifs (PPxY motif) lie at residues 402-405 and 415-418; these read PPEY and PPSY.

This sequence belongs to the arrestin family. As to quaternary structure, interacts (via PPxY motifs) with ITCH (via WW domains); the interaction is direct and participates in the recruitment of the ubiquitin-protein ligase ITCH to the NOTCH1 receptor. Interacts with ARRB1 and ARRB2; the interaction is direct. Interacts with TSG101; may recruit TSG101 to the plasma membrane. Interacts (via PPxY motifs) with WWP2 (via WW domains); ubiquitinates ARRDC1. Interacts with SLC11A2; controls the incorporation of SLC11A2 into extracellular vesicles through an ubiquitination-dependent mechanism. Interacts with WWP1 (via WW domains). Interacts with NEDD4 (via WW domains). Interacts with PDCD6IP. In terms of processing, ubiquitinated. Ubiquitination by WWP2; promotes localization to extracellular microvesicles. Ubiquitinated by WWP1.

It localises to the cell membrane. Its function is as follows. Functions as an adapter recruiting ubiquitin-protein ligases to their specific substrates. Through an ubiquitination-dependent mechanism plays for instance a role in the incorporation of SLC11A2 into extracellular vesicles. More generally, plays a role in the extracellular transport of proteins between cells through the release in the extracellular space of microvesicles. By participating in the ITCH-mediated ubiquitination and subsequent degradation of NOTCH1, negatively regulates the NOTCH signaling pathway. The polypeptide is Arrestin domain-containing protein 1 (Homo sapiens (Human)).